The following is a 424-amino-acid chain: Glutamyl-tRNA reductase (424 aa).

Substrate contacts are provided by residues 49-52 (TCNR), S109, 114-116 (EDQ), and Q120. The Nucleophile role is filled by C50. 189 to 194 (GFGKMS) contacts NADP(+).

Belongs to the glutamyl-tRNA reductase family. In terms of assembly, homodimer.

It carries out the reaction (S)-4-amino-5-oxopentanoate + tRNA(Glu) + NADP(+) = L-glutamyl-tRNA(Glu) + NADPH + H(+). The protein operates within porphyrin-containing compound metabolism; protoporphyrin-IX biosynthesis; 5-aminolevulinate from L-glutamyl-tRNA(Glu): step 1/2. Functionally, catalyzes the NADPH-dependent reduction of glutamyl-tRNA(Glu) to glutamate 1-semialdehyde (GSA). The polypeptide is Glutamyl-tRNA reductase (Alkaliphilus metalliredigens (strain QYMF)).